Here is a 392-residue protein sequence, read N- to C-terminus: Anhydro-N-acetylmuramic acid kinase (392 aa).

Residue 19–26 coordinates ATP; that stretch reads GTSVDGID.

Belongs to the anhydro-N-acetylmuramic acid kinase family.

The enzyme catalyses 1,6-anhydro-N-acetyl-beta-muramate + ATP + H2O = N-acetyl-D-muramate 6-phosphate + ADP + H(+). It functions in the pathway amino-sugar metabolism; 1,6-anhydro-N-acetylmuramate degradation. Its pathway is cell wall biogenesis; peptidoglycan recycling. Functionally, catalyzes the specific phosphorylation of 1,6-anhydro-N-acetylmuramic acid (anhMurNAc) with the simultaneous cleavage of the 1,6-anhydro ring, generating MurNAc-6-P. Is required for the utilization of anhMurNAc either imported from the medium or derived from its own cell wall murein, and thus plays a role in cell wall recycling. The polypeptide is Anhydro-N-acetylmuramic acid kinase (Trichormus variabilis (strain ATCC 29413 / PCC 7937) (Anabaena variabilis)).